Consider the following 253-residue polypeptide: 3-deoxy-manno-octulosonate cytidylyltransferase (253 aa).

It belongs to the KdsB family.

It localises to the cytoplasm. It carries out the reaction 3-deoxy-alpha-D-manno-oct-2-ulosonate + CTP = CMP-3-deoxy-beta-D-manno-octulosonate + diphosphate. It participates in nucleotide-sugar biosynthesis; CMP-3-deoxy-D-manno-octulosonate biosynthesis; CMP-3-deoxy-D-manno-octulosonate from 3-deoxy-D-manno-octulosonate and CTP: step 1/1. It functions in the pathway bacterial outer membrane biogenesis; lipopolysaccharide biosynthesis. Its function is as follows. Activates KDO (a required 8-carbon sugar) for incorporation into bacterial lipopolysaccharide in Gram-negative bacteria. This Edwardsiella ictaluri (strain 93-146) protein is 3-deoxy-manno-octulosonate cytidylyltransferase.